A 3259-amino-acid chain; its full sequence is Striated muscle-specific serine/threonine-protein kinase (3259 aa).

The disordered stretch occupies residues 1 to 30 (MQKARGTRGEDAGTRAPPSPGVPPKRAKVG). An Omega-N-methylarginine modification is found at Arg-33. Residues 45–126 (PVFLRPLKNA…GKASCEAVLT (82 aa)) form the Ig-like 1 domain. Ser-141 is subject to Phosphoserine. Disordered stretches follow at residues 155–185 (RAFS…TSEE), 198–226 (EQEA…GPRH), 278–716 (PSGL…DDSY), and 816–880 (VRPG…KVSL). The segment covering 158–185 (STPTGGSDTLVGTSLDTPPTSVTGTSEE) has biased composition (polar residues). Pro residues predominate over residues 301–317 (PALPPPSKSALLPPPSP). A phosphoserine mark is found at Ser-368 and Ser-375. Thr-379 is modified (phosphothreonine). Phosphoserine occurs at positions 382 and 385. Residues 404–422 (ILDKLQFFEERRRSLERSD) show a composition bias toward basic and acidic residues. Ser-423 is subject to Phosphoserine. Position 453 is a phosphothreonine (Thr-453). Phosphoserine occurs at positions 457, 463, 493, 511, 531, and 554. The span at 459–473 (EELRSPRGSVAERRR) shows a compositional bias: basic and acidic residues. Residues 510–522 (TSREELVRSHESL) show a composition bias toward basic and acidic residues. Composition is skewed to basic and acidic residues over residues 624–638 (PESR…KREP) and 663–680 (EKNR…RGPE). An Ig-like 2 domain is found at 727 to 817 (PVFEIPLQNM…ASCASSLAVR (91 aa)). A compositionally biased stretch (polar residues) spans 820-830 (ASTSPFSSPIT). Ig-like domains follow at residues 874–963 (PTFK…ARLE), 968–1056 (PESR…DELT), and 1069–1157 (PLFT…AQLY). A disulfide bridge links Cys-994 with Cys-1046. A phosphoserine mark is found at Ser-1133 and Ser-1177. Residues 1162–1185 (RTAASGPSSKLEKMPSIPEEPEHG) form a disordered region. Positions 1193 to 1283 (PDFLRPLQDL…AACYAHLYVT (91 aa)) constitute an Ig-like 6 domain. The 98-residue stretch at 1290–1387 (PDGAPQVVAV…PSEPVQLLEH (98 aa)) folds into the Fibronectin type-III 1 domain. A compositionally biased stretch (low complexity) spans 1367 to 1379 (SSGKSSSKPSAPS). Positions 1367–1386 (SSGKSSSKPSAPSEPVQLLE) are disordered. One can recognise an Ig-like 7 domain in the interval 1490–1578 (PRFESIMEDV…GEVSCKAELS (89 aa)). In terms of domain architecture, Protein kinase 1 spans 1606–1859 (YDIHQEIGRG…AEETLEHPWF (254 aa)). ATP is bound by residues 1612 to 1620 (IGRGAFSYL) and Lys-1635. Asp-1724 serves as the catalytic Proton acceptor. Disordered stretches follow at residues 1913-2244 (MPRR…QMPA), 2336-2451 (AKFK…SPVL), and 2463-2562 (RLSS…SQPN). Residues 1918–1927 (PPSGGLSSSS) are compositionally biased toward low complexity. Residues Ser-1993, Ser-2004, Ser-2019, Ser-2020, and Ser-2042 each carry the phosphoserine modification. Basic and acidic residues predominate over residues 2009 to 2019 (SPRRPELRRGS). Arg-2060 carries the post-translational modification Asymmetric dimethylarginine; alternate. Arg-2060 is modified (omega-N-methylarginine; alternate). Low complexity predominate over residues 2069–2081 (AQRLQALRQRLLR). Residues Ser-2114 and Ser-2135 each carry the phosphoserine modification. Omega-N-methylarginine is present on Arg-2144. The span at 2168 to 2179 (ESPSLSALSETQ) shows a compositional bias: polar residues. Pro residues predominate over residues 2180-2189 (PPSPALPSAP). Phosphoserine occurs at positions 2182 and 2207. Positions 2193–2207 (ITKSPEPSAATSRDS) are enriched in polar residues. The segment covering 2208 to 2218 (PQPPAPQPVPE) has biased composition (pro residues). Basic and acidic residues predominate over residues 2219-2229 (KIPEPKPEPVR). Positions 2230-2244 (AAKPAQPPLALQMPA) are enriched in low complexity. Basic and acidic residues predominate over residues 2336–2345 (AKFKRSRESP). Over residues 2346–2355 (LSRGLRLLSR) the composition is skewed to low complexity. Positions 2356 to 2372 (SRSEERGPFRGAEDDGI) are enriched in basic and acidic residues. Phosphoserine is present on Ser-2376. Thr-2380 is subject to Phosphothreonine. Residues 2384–2395 (LVRRPERSRSVQ) are compositionally biased toward basic and acidic residues. A phosphoserine mark is found at Ser-2410, Ser-2414, Ser-2438, Ser-2439, Ser-2444, and Ser-2448. Positions 2463–2484 (RLSSRLQRSGSSEDSGGASGRS) are enriched in low complexity. A compositionally biased stretch (polar residues) spans 2510-2520 (QLASQTGATTP). Phosphoserine occurs at positions 2521 and 2524. Positions 2521-2540 (SAESLGSEASGTSGSSAPGE) are enriched in low complexity. The segment covering 2543 to 2554 (SRHRWGLSRLRK) has biased composition (basic residues). At Ser-2559 the chain carries Phosphoserine. The 91-residue stretch at 2583–2673 (PPVFHIKLKD…GSITSSCTVA (91 aa)) folds into the Ig-like 8 domain. A disulfide bridge links Cys-2605 with Cys-2657. Residues 2680–2774 (KLAPPEVPQT…KVFIRGTQDS (95 aa)) form the Fibronectin type-III 2 domain. Residue Thr-2771 is modified to Phosphothreonine. 2 disordered regions span residues 2771 to 2829 (TQDS…MSAN) and 2855 to 2957 (TQQA…PQKP). Ser-2774 bears the Phosphoserine mark. A compositionally biased stretch (pro residues) spans 2793 to 2810 (RAPPPDSPTSLVPTPPLA). Residues 2814-2828 (SQASTLSPSTSSMSA) are compositionally biased toward low complexity. The 107-residue stretch at 2859–2965 (EPSPPSILVT…KPYTFLEEKA (107 aa)) folds into the Fibronectin type-III 3 domain. Over residues 2880–2907 (GTLTPTSSPQGVKPAPSSSSLYMVTSFV) the composition is skewed to polar residues. A compositionally biased stretch (pro residues) spans 2910–2924 (PPDPQPPAPEPPPEP). The segment covering 2940-2950 (SSPTPESTTLR) has biased composition (polar residues). Ser-2941 is subject to Phosphoserine. In terms of domain architecture, Protein kinase 2 spans 2958–3210 (YTFLEEKARG…LQDCLAHPWL (253 aa)). ATP-binding positions include 2964-2972 (KARGRFGVV) and Lys-2987. The active-site Proton acceptor is the Asp-3077.

This sequence belongs to the protein kinase superfamily. CAMK Ser/Thr protein kinase family. In terms of assembly, interacts with MTM1. Post-translationally, may be autophosphorylated. As to expression, isoform 2 is highly expressed in differentiated arterial smooth muscle cells (ASMC) in the medial layer of the aorta. Weakly detected in brain and testis and to a lesser extent in organs rich in striated muscle or visceral smooth muscle.

It is found in the nucleus. The enzyme catalyses L-seryl-[protein] + ATP = O-phospho-L-seryl-[protein] + ADP + H(+). The catalysed reaction is L-threonyl-[protein] + ATP = O-phospho-L-threonyl-[protein] + ADP + H(+). In terms of biological role, isoform 2 may have a role in regulating the growth and differentiation of arterial smooth muscle cells. The sequence is that of Striated muscle-specific serine/threonine-protein kinase (Speg) from Rattus norvegicus (Rat).